A 429-amino-acid chain; its full sequence is tRNA(Ile2) 2-agmatinylcytidine synthetase TiaS (429 aa).

The segment at K403–L429 is disordered.

It belongs to the TiaS family.

The protein resides in the cytoplasm. It catalyses the reaction cytidine(34) in tRNA(Ile2) + agmatine + ATP + H2O = 2-agmatinylcytidine(34) in tRNA(Ile2) + AMP + 2 phosphate + 2 H(+). Its function is as follows. ATP-dependent agmatine transferase that catalyzes the formation of 2-agmatinylcytidine (agm2C) at the wobble position (C34) of tRNA(Ile2), converting the codon specificity from AUG to AUA. The polypeptide is tRNA(Ile2) 2-agmatinylcytidine synthetase TiaS (Hyperthermus butylicus (strain DSM 5456 / JCM 9403 / PLM1-5)).